The chain runs to 248 residues: MSVSPVAIVSTPVAAPESSAAVAVPPVVVRWRGVEPYETSFDAMRAFTDARTADTVDEIWIVEHPPVYTLGQAGDPAHLLVGDSGIPLVKVDRGGQITYHGPGQIVAYLLLDLRRRKLTVRTLVTKIEEAVIETLAAYNLASVRKAGAPGIYVASGVHEGAKIAALGLKIRNGCSYHGLSLNVKMDLRPFLAINPCGYAGLETVDMASLEVAADWNDVARTLVRRLIANLDGESAAADTPHALEHSND.

The region spanning 53–234 (ADTVDEIWIV…RLIANLDGES (182 aa)) is the BPL/LPL catalytic domain. Substrate-binding positions include 93-100 (RGGQITYH), 165-167 (ALG), and 178-180 (GLS). The Acyl-thioester intermediate role is filled by Cys196.

This sequence belongs to the LipB family.

The protein localises to the cytoplasm. It carries out the reaction octanoyl-[ACP] + L-lysyl-[protein] = N(6)-octanoyl-L-lysyl-[protein] + holo-[ACP] + H(+). Its pathway is protein modification; protein lipoylation via endogenous pathway; protein N(6)-(lipoyl)lysine from octanoyl-[acyl-carrier-protein]: step 1/2. Functionally, catalyzes the transfer of endogenously produced octanoic acid from octanoyl-acyl-carrier-protein onto the lipoyl domains of lipoate-dependent enzymes. Lipoyl-ACP can also act as a substrate although octanoyl-ACP is likely to be the physiological substrate. The polypeptide is Octanoyltransferase (Burkholderia multivorans (strain ATCC 17616 / 249)).